A 478-amino-acid chain; its full sequence is Lysosome membrane protein 2 (478 aa).

The Cytoplasmic portion of the chain corresponds to 1-4 (MGRC). A helical membrane pass occupies residues 5–27 (CFYTAGTLSLLLLVTSVTLLVAR). Over 28–433 (VFQKAVDQTI…QLKSVINTTL (406 aa)) the chain is Lumenal. N-linked (GlcNAc...) asparagine glycans are attached at residues N45, N68, N105, and N122. The interval 155–191 (LIEAMLKAYQQKLFVIHTVHELLWGYKDEILSLVHIF) is important for interaction with GBA1. N-linked (GlcNAc...) asparagine glycans are attached at residues N206, N224, N249, and N304. Disulfide bonds link C274–C329 and C312–C318. 3 N-linked (GlcNAc...) asparagine glycosylation sites follow: N325, N412, and N430. Residues 434 to 459 (VVTNIPYIIMALGVFFGLVFTWLACR) form a helical membrane-spanning segment. The Cytoplasmic portion of the chain corresponds to 460–478 (GQGSMDEGTADERAPLIRT).

It belongs to the CD36 family. As to quaternary structure, interacts with GBA1. In terms of processing, acylated by palmitic acid group(s). Heavily glycosylated. In terms of tissue distribution, detected in the extracts of brain, heart, lung, liver and kidney.

The protein localises to the lysosome membrane. Acts as a lysosomal receptor for glucosylceramidase (GBA1) targeting. The protein is Lysosome membrane protein 2 (Scarb2) of Mus musculus (Mouse).